Here is a 126-residue protein sequence, read N- to C-terminus: Fluoride-specific ion channel FluC (126 aa).

A run of 4 helical transmembrane segments spans residues 4–24 (SILAIAIGAAAGALLRWFLGL), 36–56 (GTLAANLVGGYIIGVAVALFA), 68–88 (LIITGFCGGLTTFSTFSAEVV), and 99–119 (AFAAIAVHVSGSLLMTMAGIA). Na(+) is bound by residues Gly-75 and Thr-78.

It belongs to the fluoride channel Fluc/FEX (TC 1.A.43) family.

Its subcellular location is the cell inner membrane. The enzyme catalyses fluoride(in) = fluoride(out). With respect to regulation, na(+) is not transported, but it plays an essential structural role and its presence is essential for fluoride channel function. Fluoride-specific ion channel. Important for reducing fluoride concentration in the cell, thus reducing its toxicity. This is Fluoride-specific ion channel FluC from Chromobacterium violaceum (strain ATCC 12472 / DSM 30191 / JCM 1249 / CCUG 213 / NBRC 12614 / NCIMB 9131 / NCTC 9757 / MK).